Here is a 201-residue protein sequence, read N- to C-terminus: Methylated-DNA--protein-cysteine methyltransferase (201 aa).

Positions 131, 132, and 146 each coordinate DNA. The Nucleophile; methyl group acceptor role is filled by Cys-163.

Belongs to the MGMT family.

The protein resides in the nucleus. It carries out the reaction a 6-O-methyl-2'-deoxyguanosine in DNA + L-cysteinyl-[protein] = S-methyl-L-cysteinyl-[protein] + a 2'-deoxyguanosine in DNA. The enzyme catalyses a 4-O-methyl-thymidine in DNA + L-cysteinyl-[protein] = a thymidine in DNA + S-methyl-L-cysteinyl-[protein]. Its function is as follows. Involved in the cellular defense against the biological effects of O6-methylguanine (O6-MeG) and O4-methylthymine (O4-MeT) in DNA. Repairs the methylated nucleobase in DNA by stoichiometrically transferring the methyl group to a cysteine residue in the enzyme. This is a suicide reaction: the enzyme is irreversibly inactivated. This Lodderomyces elongisporus (strain ATCC 11503 / CBS 2605 / JCM 1781 / NBRC 1676 / NRRL YB-4239) (Yeast) protein is Methylated-DNA--protein-cysteine methyltransferase (MGT1).